We begin with the raw amino-acid sequence, 290 residues long: MRLSVKAPAKINLSLDVLYKRPDGYHEVKMVMTTIDLADRIELIPLPGEDAIRVVSQNRFVPDDSRNLAYQAAQLLKETFSIREGVAISITKHIPVAAGLAGGSSDAAATLRGLNKLWKLGLSVHELAELGAQIGSDVAFCVYGGTAVATGRGEIITPISSPPPCWVVLAKPPIGVSTAEVYRNLQLEHVNHPDVDAMVGAIEQQDYAAICRSVGNVLEEVTLKKYPEVAHIKEQMRRFGADAVLMSGSGPTVFGLIEHDSRMQRVYNGLRGFCDQVFAVRLLGERHSLD.

Lys-10 is a catalytic residue. ATP is bound at residue 95-105 (PVAAGLAGGSS). Asp-137 is an active-site residue.

Belongs to the GHMP kinase family. IspE subfamily.

The enzyme catalyses 4-CDP-2-C-methyl-D-erythritol + ATP = 4-CDP-2-C-methyl-D-erythritol 2-phosphate + ADP + H(+). Its pathway is isoprenoid biosynthesis; isopentenyl diphosphate biosynthesis via DXP pathway; isopentenyl diphosphate from 1-deoxy-D-xylulose 5-phosphate: step 3/6. Functionally, catalyzes the phosphorylation of the position 2 hydroxy group of 4-diphosphocytidyl-2C-methyl-D-erythritol. This chain is 4-diphosphocytidyl-2-C-methyl-D-erythritol kinase, found in Geobacillus thermodenitrificans (strain NG80-2).